An 89-amino-acid polypeptide reads, in one-letter code: Small ribosomal subunit protein uS15 (89 aa).

Residues 1 to 21 are compositionally biased toward basic and acidic residues; sequence MAITQERKNQLISEFKTHESD. The disordered stretch occupies residues 1–23; the sequence is MAITQERKNQLISEFKTHESDTG.

It belongs to the universal ribosomal protein uS15 family. In terms of assembly, part of the 30S ribosomal subunit. Forms a bridge to the 50S subunit in the 70S ribosome, contacting the 23S rRNA.

Its function is as follows. One of the primary rRNA binding proteins, it binds directly to 16S rRNA where it helps nucleate assembly of the platform of the 30S subunit by binding and bridging several RNA helices of the 16S rRNA. Forms an intersubunit bridge (bridge B4) with the 23S rRNA of the 50S subunit in the ribosome. The chain is Small ribosomal subunit protein uS15 from Bacillus velezensis (strain DSM 23117 / BGSC 10A6 / LMG 26770 / FZB42) (Bacillus amyloliquefaciens subsp. plantarum).